The primary structure comprises 1372 residues: DNA-directed RNA polymerase subunit beta (1372 aa).

It belongs to the RNA polymerase beta chain family. In terms of assembly, the RNAP catalytic core consists of 2 alpha, 1 beta, 1 beta' and 1 omega subunit. When a sigma factor is associated with the core the holoenzyme is formed, which can initiate transcription.

It carries out the reaction RNA(n) + a ribonucleoside 5'-triphosphate = RNA(n+1) + diphosphate. Functionally, DNA-dependent RNA polymerase catalyzes the transcription of DNA into RNA using the four ribonucleoside triphosphates as substrates. The polypeptide is DNA-directed RNA polymerase subunit beta (Nitratidesulfovibrio vulgaris (strain DSM 19637 / Miyazaki F) (Desulfovibrio vulgaris)).